Consider the following 564-residue polypeptide: ATP-dependent RNA helicase ROK1 (564 aa).

Disordered stretches follow at residues 1-25 and 62-87; these read MDIF…KAAD and EDDR…DGLI. 2 stretches are compositionally biased toward basic and acidic residues: residues 13 to 23 and 62 to 86; these read VKKESGPKAKA and EDDR…DDGL. The Q motif signature appears at 122–150; the sequence is DLISRFSFDRRLLNNLIENGFTEPTPIQC. A Helicase ATP-binding domain is found at 153 to 333; it reads IPVALNNRDV…QSIMMDPVRV (181 aa). 166 to 173 is a binding site for ATP; the sequence is GPTGSGKT. Residues 280–283 carry the DEAD box motif; sequence DEAD. In terms of domain architecture, Helicase C-terminal spans 344–506; that stretch reads NIEQKLIFCG…EVSEWMDKMA (163 aa). Residues 512 to 564 are disordered; it reads EKESIKNGKAHKERKQITTVPKMDKAKRRRQQEMIAASKRRKNEELSKKHFSK. Residues 553-564 show a composition bias toward basic and acidic residues; it reads KNEELSKKHFSK.

This sequence belongs to the DEAD box helicase family. DDX52/ROK1 subfamily. Interacts with the U3 snoRNA and is associated with the 90S and 40S pre-ribosomes. This association requires the presence of RRP5. Also interacts with OSH3.

It localises to the nucleus. Its subcellular location is the nucleolus. The enzyme catalyses ATP + H2O = ADP + phosphate + H(+). Its function is as follows. ATP-dependent RNA helicase involved in 40S ribosomal subunit biogenesis. Required for the processing and cleavage of 35S pre-rRNA at sites A0, A1, and A2, leading to mature 18S rRNA. The polypeptide is ATP-dependent RNA helicase ROK1 (ROK1) (Saccharomyces cerevisiae (strain YJM789) (Baker's yeast)).